The primary structure comprises 175 residues: Co-chaperone protein HscB homolog (175 aa).

One can recognise a J domain in the interval 7-79 (SHFELFHLPA…LKRATYLLHL (73 aa)).

It belongs to the HscB family. As to quaternary structure, interacts with HscA and stimulates its ATPase activity.

Co-chaperone involved in the maturation of iron-sulfur cluster-containing proteins. Seems to help targeting proteins to be folded toward HscA. The chain is Co-chaperone protein HscB homolog from Burkholderia thailandensis (strain ATCC 700388 / DSM 13276 / CCUG 48851 / CIP 106301 / E264).